A 410-amino-acid polypeptide reads, in one-letter code: Gamma-glutamyl phosphate reductase (410 aa).

It belongs to the gamma-glutamyl phosphate reductase family.

It localises to the cytoplasm. It carries out the reaction L-glutamate 5-semialdehyde + phosphate + NADP(+) = L-glutamyl 5-phosphate + NADPH + H(+). It participates in amino-acid biosynthesis; L-proline biosynthesis; L-glutamate 5-semialdehyde from L-glutamate: step 2/2. Functionally, catalyzes the NADPH-dependent reduction of L-glutamate 5-phosphate into L-glutamate 5-semialdehyde and phosphate. The product spontaneously undergoes cyclization to form 1-pyrroline-5-carboxylate. The chain is Gamma-glutamyl phosphate reductase from Campylobacter jejuni subsp. jejuni serotype O:2 (strain ATCC 700819 / NCTC 11168).